A 71-amino-acid chain; its full sequence is Protein SlyX homolog (71 aa).

The protein belongs to the SlyX family.

The sequence is that of Protein SlyX homolog from Rhodopseudomonas palustris (strain BisB5).